We begin with the raw amino-acid sequence, 156 residues long: Large ribosomal subunit protein uL13 (156 aa).

The protein belongs to the universal ribosomal protein uL13 family. Part of the 50S ribosomal subunit.

This protein is one of the early assembly proteins of the 50S ribosomal subunit, although it is not seen to bind rRNA by itself. It is important during the early stages of 50S assembly. This chain is Large ribosomal subunit protein uL13, found in Archaeoglobus fulgidus (strain ATCC 49558 / DSM 4304 / JCM 9628 / NBRC 100126 / VC-16).